The sequence spans 151 residues: Small ribosomal subunit protein uS13 (151 aa).

Belongs to the universal ribosomal protein uS13 family. In terms of assembly, part of the 30S ribosomal subunit. Forms a loose heterodimer with protein S19. Forms two bridges to the 50S subunit in the 70S ribosome.

Its function is as follows. Located at the top of the head of the 30S subunit, it contacts several helices of the 16S rRNA. In the 70S ribosome it contacts the 23S rRNA (bridge B1a) and protein L5 of the 50S subunit (bridge B1b), connecting the 2 subunits; these bridges are implicated in subunit movement. This Staphylothermus marinus (strain ATCC 43588 / DSM 3639 / JCM 9404 / F1) protein is Small ribosomal subunit protein uS13.